The sequence spans 938 residues: Protein translocase subunit SecA (938 aa).

Residues Gln-90, 108–112 (GEGKT), and Asp-504 contribute to the ATP site.

It belongs to the SecA family. Monomer and homodimer. Part of the essential Sec protein translocation apparatus which comprises SecA, SecYEG and auxiliary proteins SecDF. Other proteins may also be involved.

The protein resides in the cell inner membrane. It is found in the cellular thylakoid membrane. The protein localises to the cytoplasm. It catalyses the reaction ATP + H2O + cellular proteinSide 1 = ADP + phosphate + cellular proteinSide 2.. In terms of biological role, part of the Sec protein translocase complex. Interacts with the SecYEG preprotein conducting channel. Has a central role in coupling the hydrolysis of ATP to the transfer of proteins into and across the cell membrane, serving as an ATP-driven molecular motor driving the stepwise translocation of polypeptide chains across the membrane. Probably participates in protein translocation into and across both the cytoplasmic and thylakoid membranes in cyanobacterial cells. The chain is Protein translocase subunit SecA from Microcystis aeruginosa (strain NIES-843 / IAM M-2473).